The following is a 449-amino-acid chain: Tubulin alpha-2B chain (449 aa).

Residue Q11 coordinates GTP. The residue at position 40 (K40) is an N6-acetyllysine. The GTP site is built by E71, S140, G144, T145, T179, N206, and N228. E71 serves as a coordination point for Mg(2+). Residue E254 is part of the active site.

Belongs to the tubulin family. As to quaternary structure, dimer of alpha and beta chains. A typical microtubule is a hollow water-filled tube with an outer diameter of 25 nm and an inner diameter of 15 nM. Alpha-beta heterodimers associate head-to-tail to form protofilaments running lengthwise along the microtubule wall with the beta-tubulin subunit facing the microtubule plus end conferring a structural polarity. Microtubules usually have 13 protofilaments but different protofilament numbers can be found in some organisms and specialized cells. Mg(2+) is required as a cofactor. Post-translationally, acetylation of alpha chains at Lys-40 stabilizes microtubules and affects affinity and processivity of microtubule motors. This modification has a role in multiple cellular functions, ranging from cell motility, cell cycle progression or cell differentiation to intracellular trafficking and signaling.

It localises to the cytoplasm. Its subcellular location is the cytoskeleton. The protein resides in the spindle. It is found in the nucleus. It catalyses the reaction GTP + H2O = GDP + phosphate + H(+). In terms of biological role, tubulin is the major constituent of microtubules, a cylinder consisting of laterally associated linear protofilaments composed of alpha- and beta-tubulin heterodimers. Microtubules grow by the addition of GTP-tubulin dimers to the microtubule end, where a stabilizing cap forms. Below the cap, tubulin dimers are in GDP-bound state, owing to GTPase activity of alpha-tubulin. This chain is Tubulin alpha-2B chain (ALTBE), found in Physarum polycephalum (Slime mold).